Consider the following 143-residue polypeptide: MAAEGRVQRVASEFQKVISLLLRTRIKDAKLASATITEVDLSKDLSYAKIYYTCLAIEDAEYIDKAFEKSKGFFRSSIAKSLSLRIVPNLKFIYDTSLDYGMQMEEKIQQALEADSKIIKQDDKSLQENYKQNDKETKAEKLR.

The tract at residues 123–143 (DKSLQENYKQNDKETKAEKLR) is disordered.

This sequence belongs to the RbfA family. In terms of assembly, monomer. Binds 30S ribosomal subunits, but not 50S ribosomal subunits or 70S ribosomes.

Its subcellular location is the cytoplasm. Its function is as follows. One of several proteins that assist in the late maturation steps of the functional core of the 30S ribosomal subunit. Associates with free 30S ribosomal subunits (but not with 30S subunits that are part of 70S ribosomes or polysomes). Required for efficient processing of 16S rRNA. May interact with the 5'-terminal helix region of 16S rRNA. The chain is Ribosome-binding factor A from Francisella tularensis subsp. mediasiatica (strain FSC147).